The chain runs to 89 residues: Putative membrane protein insertion efficiency factor (89 aa).

The disordered stretch occupies residues 69-89; the sequence is DPVPPAHTERGGTMCPSRLPE.

It belongs to the UPF0161 family.

The protein resides in the cell inner membrane. Functionally, could be involved in insertion of integral membrane proteins into the membrane. This Paramagnetospirillum magneticum (strain ATCC 700264 / AMB-1) (Magnetospirillum magneticum) protein is Putative membrane protein insertion efficiency factor.